A 172-amino-acid polypeptide reads, in one-letter code: Transcriptional regulator TAC1 (172 aa).

Residues 1–28 form a disordered region; the sequence is MENIKNPKNADDCSDSISKNSHQGVDDS. Residues 15–28 show a composition bias toward polar residues; sequence DSISKNSHQGVDDS. The segment at 35-57 adopts a C2H2-type zinc-finger fold; sequence YVCSFCIRGFSNAQALGGHMNIH. An EAR-like (transcriptional repression) motif is present at residues 156-160; the sequence is LDLEL.

In terms of tissue distribution, preferentially expressed in roots and flowers. Slightly expressed in leaves and stems.

The protein resides in the nucleus. Activation factor which mediates telomerase activity and potentiates responses to auxin through the regulation of BT2. Binds in vitro to the DNA sequence 5'-GACAGTGTTAC-3' of the BT2 promoter. In Arabidopsis thaliana (Mouse-ear cress), this protein is Transcriptional regulator TAC1 (TAC1).